The following is an 892-amino-acid chain: Ataxin-7 (892 aa).

Residues 1-15 (MSERAADDVRGEPRR) show a composition bias toward basic and acidic residues. Disordered stretches follow at residues 1–74 (MSER…SAAA) and 195–247 (SKGG…SRVP). The segment covering 16–38 (AAAAAGGAAAAAARQQQQQQQQQ) has biased composition (low complexity). Positions 39–55 (QPPPPQPQRQQHPPPPP) are enriched in pro residues. Positions 195-222 (SKGGSASGSNRSSSGGVLSASSSSSKLL) are enriched in low complexity. Lys-257 participates in a covalent cross-link: Glycyl lysine isopeptide (Lys-Gly) (interchain with G-Cter in SUMO); alternate. Lys-257 is covalently cross-linked (Glycyl lysine isopeptide (Lys-Gly) (interchain with G-Cter in SUMO2); alternate). Disordered regions lie at residues 298 to 328 (PTLPSPGQILNGKGLPAPPTLEKKPEDNSNN), 389 to 505 (HKNK…ESVE), 616 to 730 (KSVP…SSHS), and 818 to 892 (SHGS…KARP). Basic and acidic residues-rich tracts occupy residues 318–327 (LEKKPEDNSN) and 389–403 (HKNKTREKELIRHPD). The SCA7 domain maps to 334-401 (KRLSEREFDP…KTREKELIRH (68 aa)). Pro residues-rich tracts occupy residues 405–419 (QQPPQPLRDPHPAPP), 448–458 (HTPSLPRPPGC), and 468–483 (IDPPPVHESPHPPLPA). Over residues 493-502 (EEGEGDDKEE) the composition is skewed to acidic residues. The span at 616–629 (KSVPAHGTTLNAQP) shows a compositional bias: polar residues. The span at 640–669 (SMQSRQVSSSSSSPSTPSGLSSVPSSPMSR) shows a compositional bias: low complexity. The span at 670-680 (KPQKLKSSKSL) shows a compositional bias: basic residues. The span at 685 to 695 (SSGNSTNCQNA) shows a compositional bias: polar residues. 2 stretches are compositionally biased toward low complexity: residues 716-730 (HSSSSSSSSSSSSHS) and 840-851 (SPSSSSINNSSS).

It belongs to the ataxin-7 family. As to quaternary structure, component of the SAGA transcription coactivator-HAT complex, at least composed of SUPT3H, GCN5L2, TAF5L, TAF6L, SUPT7L, TADA3L, TAD1L, TAF10, TAF12, TRRAP, TAF9 and ATXN7. The STAGA core complex is associated with a subcomplex required for histone deubiquitination composed of ATXN7L3, ENY2 and USP22. Interacts with SORBS1, PSMC1 and CRX. Interacts with TRRAP, GCN5L2 and TAF10. Interacts with alpha tubulin. In terms of processing, proteolytically cleaved by caspase-7 (CASP7). The cleavage may be involved in SCA7 degeneration: the isoform fragments may exert distinct toxic influences that could contribute to selective neurodegeneration. Sumoylation decreases the aggregation propensity and cellular toxicity of forms with an expanded poly-Gln region but has no effect on subcellular location or interaction with components of the STAGA complex. As to expression, isoform a is expressed in CNS, but is expressed predominantly in the peripherical tissues. In terms of tissue distribution, isoform b is expressed in CNS. Also highly expressed in the frontal lobe, skeletal muscle and spinal cord and is expressed at a lower level in the lung, lymphoblast and intestine.

It is found in the nucleus. Its subcellular location is the nucleolus. The protein localises to the nucleus matrix. The protein resides in the cytoplasm. It localises to the cytoskeleton. Its function is as follows. Acts as a component of the SAGA (aka STAGA) transcription coactivator-HAT complex. Mediates the interaction of SAGA complex with the CRX and is involved in CRX-dependent gene activation. Probably involved in tethering the deubiquitination module within the SAGA complex. Necessary for microtubule cytoskeleton stabilization. Involved in neurodegeneration. The protein is Ataxin-7 (ATXN7) of Homo sapiens (Human).